A 262-amino-acid polypeptide reads, in one-letter code: Homeobox-leucine zipper protein HOX24 (262 aa).

Disordered regions lie at residues 44–68 (AAGR…RKRR) and 162–189 (LNER…NSVM). Over residues 46–62 (GRGGGDGDGGGGGGGGG) the composition is skewed to gly residues. Residues 61–122 (GGGERKRRFT…NKRARWRSKQ (62 aa)) constitute a DNA-binding region (homeobox). A leucine-zipper region spans residues 121–165 (KQIEHDYAALRAQYDALHARVESLRQEKLALAAQVDELRGKLNER).

This sequence belongs to the HD-ZIP homeobox family. Class I subfamily. Expressed in roots and panicles.

The protein resides in the nucleus. In terms of biological role, probable transcription factor. The protein is Homeobox-leucine zipper protein HOX24 (HOX24) of Oryza sativa subsp. indica (Rice).